Here is a 1128-residue protein sequence, read N- to C-terminus: Nck-associated protein 1 (1128 aa).

S2 is modified (N-acetylserine). Positions 640-665 are disordered; it reads AVNKKSKKQTGKKGEPEREKPGVESM. Basic and acidic residues predominate over residues 651-665; sequence KKGEPEREKPGVESM. The chain crosses the membrane as a helical span at residues 995–1015; that stretch reads IACLLMVFVAVSLPTLASNVM.

It belongs to the HEM-1/HEM-2 family. As to quaternary structure, component of the WAVE1 complex composed of ABI2, CYFIP1 or CYFIP2, BRK1, NCKAP1 and WASF1/WAVE1. Within the complex, a heterodimer containing NCKAP1 and CYFIP1 interacts with a heterotrimer formed by WAVE1, ABI2 and BRK1. Component of the WAVE2 complex composed of ABI1, CYFIP1/SRA1, NCKAP1/NAP1 and WASF2/WAVE2. CYFIP2 binds to activated RAC1 which causes the complex to dissociate, releasing activated WASF1. The complex can also be activated by NCK1. Associates preferentially with the first SH3 domain of NCK. Interacts with NYAP1, NYAP2 and MYO16. Interacts with TMEM132D. Preferentially expressed in brain, heart, liver and testis.

It is found in the cell membrane. Its subcellular location is the cell projection. The protein localises to the lamellipodium membrane. Its function is as follows. Part of the WAVE complex that regulates lamellipodia formation. The WAVE complex regulates actin filament reorganization via its interaction with the Arp2/3 complex. Actin remodeling activity is regulated by RAC1. As component of the WAVE1 complex, required for BDNF-NTRK2 endocytic trafficking and signaling from early endosomes. The sequence is that of Nck-associated protein 1 (Nckap1) from Rattus norvegicus (Rat).